Here is a 704-residue protein sequence, read N- to C-terminus: Glycogen [starch] synthase, liver (704 aa).

A phosphoserine mark is found at Ser8 and Ser11. UDP is bound at residue Lys40. The UDP-alpha-D-glucose site is built by His205 and Arg211. Alpha-D-glucose 6-phosphate is bound by residues His291, Glu292, Gln294, His297, and Lys301. Residue Arg331 participates in UDP binding. UDP-alpha-D-glucose is bound at residue Arg331. Alpha-D-glucose 6-phosphate is bound at residue His501. Residues Glu510, Trp512, and Gly513 each coordinate UDP-alpha-D-glucose. Residue Thr515 participates in UDP binding. Arg582 and Arg586 together coordinate alpha-D-glucose 6-phosphate. Residues 620-704 (KFHLEPTSPP…KKKLHGEYKN (85 aa)) form a disordered region. Ser627 is subject to Phosphoserine. Phosphoserine; by GSK3-alpha and GSK3-beta occurs at positions 641, 645, 649, and 653. A compositionally biased stretch (low complexity) spans 647–657 (SGSQTSSPQSS). Ser657 carries the phosphoserine; by CK2 modification. Residues 659 to 675 (VENEGDEDERYDEEEEA) are compositionally biased toward acidic residues. Ser684 carries the post-translational modification Phosphoserine.

The protein belongs to the glycosyltransferase 3 family. Part of the glycogen synthase (GS)-glycogenin complex, a heterooctamer composed of a tetramer of GS and 2 dimers of glycogenin, where each GS protomer binds to one glycogenin subunit (via glycogenin C-terminus); the GS tetramer may dissociate from glycogenin dimers to continue glycogen polymerization on its own. May also form a heterooctamer complex with GYG1 (via GYG1 C-terminus). Primed phosphorylation at Ser-657 (site 5) by CSNK2A1 and CSNK2A2 is required for inhibitory phosphorylation at Ser-641 (site 3a), Ser-645 (site 3b), Ser-649 (site 3c) and Ser-653 (site 4) by GSK3A an GSK3B. Dephosphorylation at Ser-641 and Ser-645 by PP1 activates the enzyme. Phosphorylation at Ser-8 is not required for interaction with GYG1. Interaction with GYG1 does not regulate the phosphorylation at Ser-8 and Ser-641. As to expression, specifically expressed in liver (at protein level).

It carries out the reaction [(1-&gt;4)-alpha-D-glucosyl](n) + UDP-alpha-D-glucose = [(1-&gt;4)-alpha-D-glucosyl](n+1) + UDP + H(+). Its pathway is glycan biosynthesis; glycogen biosynthesis. Allosteric activation by glucose-6-phosphate. Phosphorylation reduces the activity towards UDP-glucose. When in the non-phosphorylated state, glycogen synthase does not require glucose-6-phosphate as an allosteric activator; when phosphorylated it does. Glycogen synthase participates in the glycogen biosynthetic process along with glycogenin and glycogen branching enzyme. Extends the primer composed of a few glucose units formed by glycogenin by adding new glucose units to it. In this context, glycogen synthase transfers the glycosyl residue from UDP-Glc to the non-reducing end of alpha-1,4-glucan. This chain is Glycogen [starch] synthase, liver, found in Rattus norvegicus (Rat).